The sequence spans 153 residues: Membrane-spanning 4-domains subfamily A member 13 (153 aa).

Transmembrane regions (helical) follow at residues Met1–Ile21, Gly36–Trp56, Ile71–Phe91, and Val111–Cys131.

The protein belongs to the MS4A family.

It localises to the membrane. May be involved in signal transduction as a component of a multimeric receptor complex. The chain is Membrane-spanning 4-domains subfamily A member 13 (MS4A13) from Bos taurus (Bovine).